We begin with the raw amino-acid sequence, 338 residues long: Fructose-1,6-bisphosphatase class 1 (338 aa).

Mg(2+)-binding residues include E91, D113, L115, and D116. Substrate is bound by residues 116–119 (DGSS), N208, and K274. Residue E280 participates in Mg(2+) binding.

It belongs to the FBPase class 1 family. As to quaternary structure, homotetramer. Mg(2+) serves as cofactor.

The protein resides in the cytoplasm. The enzyme catalyses beta-D-fructose 1,6-bisphosphate + H2O = beta-D-fructose 6-phosphate + phosphate. It functions in the pathway carbohydrate biosynthesis; gluconeogenesis. This is Fructose-1,6-bisphosphatase class 1 from Ralstonia pickettii (strain 12J).